Reading from the N-terminus, the 192-residue chain is Lipid A acyltransferase PagP (192 aa).

The N-terminal stretch at 1-26 (MTVVNKSFLTFLVFFCQILFPLNASA) is a signal peptide. Active-site residues include His-64, Asp-107, and Ser-108.

The protein belongs to the lipid A palmitoyltransferase family. In terms of assembly, homodimer.

Its subcellular location is the cell outer membrane. It catalyses the reaction a lipid A + a 1,2-diacyl-sn-glycero-3-phosphocholine = a hepta-acyl lipid A + a 2-acyl-sn-glycero-3-phosphocholine. The catalysed reaction is a lipid IVA + a 1,2-diacyl-sn-glycero-3-phosphocholine = a lipid IVB + a 2-acyl-sn-glycero-3-phosphocholine. It carries out the reaction a lipid IIA + a 1,2-diacyl-sn-glycero-3-phosphocholine = a lipid IIB + a 2-acyl-sn-glycero-3-phosphocholine. Its function is as follows. Transfers a fatty acid residue from the sn-1 position of a phospholipid to the N-linked hydroxyfatty acid chain on the proximal unit of lipid A or its precursors. The sequence is that of Lipid A acyltransferase PagP from Cronobacter turicensis (strain DSM 18703 / CCUG 55852 / LMG 23827 / z3032).